The chain runs to 185 residues: Ribosome-recycling factor (185 aa).

The protein belongs to the RRF family.

The protein localises to the cytoplasm. In terms of biological role, responsible for the release of ribosomes from messenger RNA at the termination of protein biosynthesis. May increase the efficiency of translation by recycling ribosomes from one round of translation to another. This is Ribosome-recycling factor from Neisseria meningitidis serogroup A / serotype 4A (strain DSM 15465 / Z2491).